We begin with the raw amino-acid sequence, 96 residues long: Co-chaperonin GroES (96 aa).

This sequence belongs to the GroES chaperonin family. In terms of assembly, heptamer of 7 subunits arranged in a ring. Interacts with the chaperonin GroEL.

It is found in the cytoplasm. In terms of biological role, together with the chaperonin GroEL, plays an essential role in assisting protein folding. The GroEL-GroES system forms a nano-cage that allows encapsulation of the non-native substrate proteins and provides a physical environment optimized to promote and accelerate protein folding. GroES binds to the apical surface of the GroEL ring, thereby capping the opening of the GroEL channel. This is Co-chaperonin GroES from Trichlorobacter lovleyi (strain ATCC BAA-1151 / DSM 17278 / SZ) (Geobacter lovleyi).